A 447-amino-acid polypeptide reads, in one-letter code: UPF0210 protein lp_2507 (447 aa).

The protein belongs to the UPF0210 family. Homodimer.

The sequence is that of UPF0210 protein lp_2507 from Lactiplantibacillus plantarum (strain ATCC BAA-793 / NCIMB 8826 / WCFS1) (Lactobacillus plantarum).